The following is a 376-amino-acid chain: Mannosyl phosphorylinositol ceramide synthase CSH1 (376 aa).

The next 2 helical transmembrane spans lie at 7–27 (ILIIANIALLISIIHYTFDLL) and 274–294 (ILSCVVTGFIFGFFILYGEFT). Residues 331–351 (NKEKRRNPTRHEYNSRGKRLR) form a disordered region. A Phosphoserine modification is found at serine 354.

The protein belongs to the glycosyltransferase 32 family. In terms of assembly, heterodimer of CSH1 and CSG2.

It is found in the vacuole membrane. It carries out the reaction a 1D-myo-inositol-1-phospho-N-[(R)-2-hydroxy-very-long-chain fatty acyl]-(R)-4-hydroxysphingoid base + GDP-alpha-D-mannose = an alpha-D-mannosyl-(1&lt;-&gt;6)-1D-myo-inositol-1-phospho-N-[(R)-2-hydroxy-very-long-chain fatty acyl]-(R)-4-hydroxysphingoid base + GDP + H(+). In terms of biological role, involved in the synthesis of mannosyl phosphorylinositol ceramide. Catalyzes the addition of mannosyl to phosphorylinositol ceramide. This is Mannosyl phosphorylinositol ceramide synthase CSH1 from Saccharomyces cerevisiae (strain ATCC 204508 / S288c) (Baker's yeast).